Consider the following 534-residue polypeptide: Lariat debranching enzyme (534 aa).

Residues Cys-8, His-10, Asp-39, and Asn-84 each coordinate a divalent metal cation. The tract at residues Ser-124 to Arg-154 is lariat recognition loop. A divalent metal cation contacts are provided by His-174, His-226, and His-228. 2 disordered regions span residues Lys-242–Ser-275 and Thr-501–Asp-534.

The protein belongs to the lariat debranching enzyme family. The cofactor is Fe(2+). Zn(2+) serves as cofactor. It depends on Mn(2+) as a cofactor.

It is found in the nucleus. With respect to regulation, active in presence of diverse metals including Fe(2+), Zn(2+), Mn(2+). Binds two metal cations in two adjacent alpha and beta metal-binding pockets. Its function is as follows. Cleaves the 2'-5' phosphodiester linkage at the branch point of lariat intron pre-mRNAs after splicing and converts them into linear molecules that are subsequently degraded. It thereby facilitates ribonucleotide turnover. The chain is Lariat debranching enzyme (ldbr) from Drosophila melanogaster (Fruit fly).